An 840-amino-acid chain; its full sequence is Leucine-zipper-like transcriptional regulator 1 (840 aa).

Alanine 2 is modified (N-acetylalanine). Kelch repeat units follow at residues 79 to 128 (AIYV…VYGS), 130 to 185 (MFVF…VYSD), 187 to 238 (LWIF…VCRD), 239 to 285 (KMFV…QRRY), 295 to 341 (HLYV…PERA), and 399 to 450 (AMYI…FVLG). BTB domains lie at 443–537 (CDVE…KYPR) and 667–736 (CDIT…NMPP).

It belongs to the LZTR1 family. Homodimer. Component of the BCR(LZTR1) E3 ubiquitin ligase complex, at least composed of CUL3, LZTR1 and RBX1. Interacts with Ras (K-Ras/KRAS, N-Ras/NRAS and H-Ras/HRAS). Interacts with RAF1. Interacts with SHOC2. Interacts with PPP1CB. Phosphorylated on tyrosine upon induction of apoptosis, leading to its degradation by the proteasome.

The protein resides in the endomembrane system. The protein localises to the recycling endosome. It is found in the golgi apparatus. The protein operates within protein modification; protein ubiquitination. Substrate-specific adapter of a BCR (BTB-CUL3-RBX1) E3 ubiquitin-protein ligase complex that mediates ubiquitination of Ras (K-Ras/KRAS, N-Ras/NRAS and H-Ras/HRAS). Is a negative regulator of RAS-MAPK signaling that acts by controlling Ras levels and decreasing Ras association with membranes. This is Leucine-zipper-like transcriptional regulator 1 from Homo sapiens (Human).